Reading from the N-terminus, the 1214-residue chain is Neuronal cell adhesion molecule (1214 aa).

An N-terminal signal peptide occupies residues Met-1–Ala-29. Topologically, residues Leu-30–Gln-1077 are extracellular. Ig-like C2-type domains lie at Pro-46–Ser-134 and Pro-141–Ser-235. Intrachain disulfides connect Cys-68–Cys-123 and Cys-167–Cys-218. Residue Asn-83 is glycosylated (N-linked (GlcNAc...) asparagine). Asn-223, Asn-245, Asn-251, Asn-276, Asn-314, and Asn-377 each carry an N-linked (GlcNAc...) asparagine glycan. 4 Ig-like C2-type domains span residues Pro-267–Thr-356, Pro-361–Asn-448, Pro-454–Glu-541, and Pro-545–Ser-626. Cys-292 and Cys-340 form a disulfide bridge. Cys-382 and Cys-432 form a disulfide bridge. Residues Asn-433 and Asn-507 are each glycosylated (N-linked (GlcNAc...) asparagine). 2 disulfides stabilise this stretch: Cys-476-Cys-525 and Cys-567-Cys-616. 7 N-linked (GlcNAc...) asparagine glycosylation sites follow: Asn-619, Asn-716, Asn-802, Asn-858, Asn-993, Asn-1009, and Asn-1019. Fibronectin type-III domains lie at Pro-649–Ala-744, Pro-746–Asp-843, Ala-848–Gly-950, and Ala-954–Gly-1051. A helical transmembrane segment spans residues Gly-1078–Ile-1100. Topologically, residues Arg-1101–Val-1214 are cytoplasmic. The segment covering Pro-1109–Asp-1129 has biased composition (basic and acidic residues). The interval Pro-1109–Val-1214 is disordered. At Thr-1131 the chain carries Phosphothreonine. Tyr-1135 is subject to Phosphotyrosine. A Phosphoserine modification is found at Ser-1136. Over residues Pro-1151–Asp-1160 the composition is skewed to basic and acidic residues. Phosphoserine occurs at positions 1161, 1164, 1181, 1200, 1201, and 1205. Over residues Asn-1198–Val-1214 the composition is skewed to polar residues.

This sequence belongs to the immunoglobulin superfamily. L1/neurofascin/NgCAM family. As to quaternary structure, constituent of a NFASC/NRCAM/ankyrin-G complex. Detected in a complex with CNTN1 and PTPRB. Interacts with MYOC. Interacts with GLDN. Detected in cerebellum Purkinje cells. Detected on nodes of Ranvier and unmyelinated axons in sciatic nerve (at protein level).

It is found in the cell membrane. Its subcellular location is the cell projection. It localises to the axon. The protein localises to the secreted. Cell adhesion protein that is required for normal responses to cell-cell contacts in brain and in the peripheral nervous system. Plays a role in neurite outgrowth in response to contactin binding. Plays a role in mediating cell-cell contacts between Schwann cells and axons. Plays a role in the formation and maintenance of the nodes of Ranvier on myelinated axons. Nodes of Ranvier contain clustered sodium channels that are crucial for the saltatory propagation of action potentials along myelinated axons. During development, nodes of Ranvier are formed by the fusion of two heminodes. Required for normal clustering of sodium channels at heminodes; not required for the formation of mature nodes with normal sodium channel clusters. Required, together with GLDN, for maintaining NFASC and sodium channel clusters at mature nodes of Ranvier. The sequence is that of Neuronal cell adhesion molecule (Nrcam) from Rattus norvegicus (Rat).